Consider the following 259-residue polypeptide: 5'-nucleotidase SurE (259 aa).

4 residues coordinate a divalent metal cation: D8, D9, S40, and N92.

Belongs to the SurE nucleotidase family. A divalent metal cation serves as cofactor.

It is found in the cytoplasm. The enzyme catalyses a ribonucleoside 5'-phosphate + H2O = a ribonucleoside + phosphate. Functionally, nucleotidase that shows phosphatase activity on nucleoside 5'-monophosphates. The protein is 5'-nucleotidase SurE of Xanthomonas euvesicatoria pv. vesicatoria (strain 85-10) (Xanthomonas campestris pv. vesicatoria).